We begin with the raw amino-acid sequence, 432 residues long: Trigger factor (432 aa).

The region spanning 163-248 (GDVVVLDFAA…VHAVKERRLP (86 aa)) is the PPIase FKBP-type domain.

It belongs to the FKBP-type PPIase family. Tig subfamily.

Its subcellular location is the cytoplasm. The catalysed reaction is [protein]-peptidylproline (omega=180) = [protein]-peptidylproline (omega=0). Functionally, involved in protein export. Acts as a chaperone by maintaining the newly synthesized protein in an open conformation. Functions as a peptidyl-prolyl cis-trans isomerase. The sequence is that of Trigger factor from Nitratidesulfovibrio vulgaris (strain DSM 19637 / Miyazaki F) (Desulfovibrio vulgaris).